A 293-amino-acid polypeptide reads, in one-letter code: Porphobilinogen deaminase (293 aa).

C235 is subject to S-(dipyrrolylmethanemethyl)cysteine.

Belongs to the HMBS family. As to quaternary structure, monomer. Dipyrromethane is required as a cofactor.

It catalyses the reaction 4 porphobilinogen + H2O = hydroxymethylbilane + 4 NH4(+). It participates in porphyrin-containing compound metabolism; protoporphyrin-IX biosynthesis; coproporphyrinogen-III from 5-aminolevulinate: step 2/4. Its function is as follows. Tetrapolymerization of the monopyrrole PBG into the hydroxymethylbilane pre-uroporphyrinogen in several discrete steps. The polypeptide is Porphobilinogen deaminase (Ruminiclostridium cellulolyticum (strain ATCC 35319 / DSM 5812 / JCM 6584 / H10) (Clostridium cellulolyticum)).